A 1003-amino-acid chain; its full sequence is Phosphatidylinositol 4,5-bisphosphate 5-phosphatase A (1003 aa).

Disordered regions lie at residues 1–110 and 147–414; these read MEGQ…AAKS and AMPR…QPTC. The short motif at 6-11 is the RSXSXX motif 1 element; sequence RSGSAR. Over residues 11 to 24 the composition is skewed to low complexity; that stretch reads RPGTRTGLGPLPGT. Arginine 56 is modified (asymmetric dimethylarginine; alternate). At arginine 56 the chain carries Omega-N-methylarginine; alternate. Arginine 65 carries the post-translational modification Omega-N-methylarginine. Arginine 76 bears the Asymmetric dimethylarginine mark. Arginine 83 carries the post-translational modification Asymmetric dimethylarginine; alternate. Arginine 83 carries the omega-N-methylarginine; alternate modification. Positions 160–174 are enriched in polar residues; that stretch reads LTPTSRDQKQLSPTS. Serine 171 carries the post-translational modification Phosphoserine. The segment covering 180 to 196 has biased composition (low complexity); sequence ALATSGLSLALASQEQP. Pro residues predominate over residues 197-210; the sequence is PQSPSSPSPVPSPV. The segment covering 284–294 has biased composition (basic and acidic residues); sequence ARPEAPRHSPE. A phosphoserine mark is found at serine 292 and serine 325. Pro residues predominate over residues 338 to 348; it reads VPPPLPKPPRS. The short motif at 346–351 is the SH3-binding element; that stretch reads PRSPSR. Composition is skewed to low complexity over residues 349-361 and 390-413; these read PSRSPSRSPNRSP and QAQESPAAATTTTSPTSSWSAQPT. An RSXSXX motif 2 motif is present at residues 351–356; sequence RSPSRS. The catalytic stretch occupies residues 422–725; that stretch reads ITVVTWNVGT…SDHKPVAAQF (304 aa). A required for ruffle localization region spans residues 726–837; that stretch reads ILQFAFRDDV…IGVTEPFQIS (112 aa). The interval 839–1003 is disordered; sequence PTSESASSST…LGLEEGGLGP (165 aa). Over residues 840–855 the composition is skewed to low complexity; the sequence is TSESASSSTDSSGTSS. Short sequence motifs (RSXSXX motif) lie at residues 871–876 and 882–887; these read RSPSPG and RSRSPG. Serine 900 bears the Phosphoserine mark. Composition is skewed to low complexity over residues 907-919 and 927-943; these read SRSPSPQSRQLPR and SSSSRGSSEEGPSGLPG. The short motif at 908 to 913 is the RSXSXX motif 5 element; it reads RSPSPQ. Serine 987 is modified (phosphoserine).

This sequence belongs to the inositol 1,4,5-trisphosphate 5-phosphatase type II family.

Its subcellular location is the cytoplasm. It catalyses the reaction 1D-myo-inositol 1,4,5-trisphosphate + H2O = 1D-myo-inositol 1,4-bisphosphate + phosphate. It carries out the reaction 1D-myo-inositol 1,3,4,5-tetrakisphosphate + H2O = 1D-myo-inositol 1,3,4-trisphosphate + phosphate. The enzyme catalyses a 1,2-diacyl-sn-glycero-3-phospho-(1D-myo-inositol-4,5-bisphosphate) + H2O = a 1,2-diacyl-sn-glycero-3-phospho-(1D-myo-inositol 4-phosphate) + phosphate. Inositol 5-phosphatase, which converts inositol 1,4,5-trisphosphate to inositol 1,4-bisphosphate. Also converts phosphatidylinositol 4,5-bisphosphate to phosphatidylinositol 4-phosphate and inositol 1,3,4,5-tetrakisphosphate to inositol 1,3,4-trisphosphate in vitro. May be involved in modulation of the function of inositol and phosphatidylinositol polyphosphate-binding proteins that are present at membranes ruffles. The protein is Phosphatidylinositol 4,5-bisphosphate 5-phosphatase A (Inpp5j) of Mus musculus (Mouse).